The primary structure comprises 408 residues: Snake venom metalloproteinase BaP1 (408 aa).

A signal peptide spans 1–20; the sequence is MIEVLLVTICLAVFPYQGSS. Positions 21–191 are excised as a propeptide; sequence IILESGNVND…KASQSNLTPE (171 aa). Gln-192 carries the pyrrolidone carboxylic acid modification. In terms of domain architecture, Peptidase M12B spans 198–394; sequence RYIELAVVAD…HNPQCILNKP (197 aa). 3 disulfides stabilise this stretch: Cys-309–Cys-389, Cys-349–Cys-373, and Cys-351–Cys-356. His-334 provides a ligand contact to Zn(2+). Glu-335 is an active-site residue. His-338 and His-344 together coordinate Zn(2+). Positions 395 to 408 are excised as a propeptide; that stretch reads LLTVSGNELLEAGE.

It belongs to the venom metalloproteinase (M12B) family. P-I subfamily. As to quaternary structure, monomer. Requires Zn(2+) as cofactor. As to expression, expressed by the venom gland.

It localises to the secreted. Inhibited by EDTA, partially inhibited by o-phenantropine, and not inhibited by PMSF, pepstatin A, and aprotinin. Zinc metalloprotease that exhibits a weak hemorrhagic activity (with a minimum hemorrhagic dose of 20 ug by intradermal and intramuscular injection into mice). The basal membrane components collagen (all chains of type IV) (COL4A4), laminin and nidogen are all degraded by this toxin. Rapidly degrades the Aalpha-chain (FGA) of fibrinogen, and later on, degrades the Bbeta-chain (FGB) of fibrinogen. Also activates the complement system, and induces rat neutrophil chemotaxis. Induces edema in mouse food pad and shows a mild myotoxicity. This Bothrops asper (Terciopelo) protein is Snake venom metalloproteinase BaP1.